A 178-amino-acid polypeptide reads, in one-letter code: Protein RICE FLOWERING LOCUS T 1 (178 aa).

Belongs to the phosphatidylethanolamine-binding protein family. As to quaternary structure, interacts with FTIP1. As to expression, expressed in leaf vascular tissues. Specifically expressed in the phloem including companion cells.

Its subcellular location is the cytoplasm. The protein localises to the nucleus. The protein resides in the endoplasmic reticulum. Its function is as follows. Probable mobile flower-promoting signal (florigen) that moves from the leaf to the shoot apical meristem (SAM) and induces flowering. Promotes the transition from vegetative growth to flowering under long day (LD) conditions. Acts upstream of MADS14 and MADS15. May also participate in the promotion of flowering under short day (SD) conditions. This chain is Protein RICE FLOWERING LOCUS T 1, found in Oryza sativa subsp. japonica (Rice).